An 876-amino-acid chain; its full sequence is Senescence-induced receptor-like serine/threonine-protein kinase (876 aa).

The signal sequence occupies residues 1–24 (MAMLKSLSSILFTSFALLFFLVHA). Residues 25-517 (QDQSGFISID…SNTKKKNKNG (493 aa)) are Extracellular-facing. LRR repeat units lie at residues 415 to 438 (RVVS…SNLT), 439 to 462 (SIRK…ANLP), and 463 to 483 (NLTE…QRLH). The helical transmembrane segment at 518–538 (YIIPLVVVGIIVVLLTALALF) threads the bilayer. Residues 539-876 (RRFKKKQQRG…LDTEMVPRAR (338 aa)) are Cytoplasmic-facing. The Protein kinase domain maps to 574-847 (NNFERVIGKG…VVMELKQIVY (274 aa)). Residues 580-588 (IGKGGFGKV) and K601 each bind ATP. The residue at position 646 (Y646) is a Phosphotyrosine. The active-site Proton acceptor is D697. S731 carries the phosphoserine modification. A Phosphothreonine modification is found at T732. The residue at position 745 (Y745) is a Phosphotyrosine.

It belongs to the protein kinase superfamily. Ser/Thr protein kinase family.

Its subcellular location is the membrane. Its function is as follows. Involved in innate immune response of plants. The polypeptide is Senescence-induced receptor-like serine/threonine-protein kinase (SIRK) (Arabidopsis thaliana (Mouse-ear cress)).